Consider the following 322-residue polypeptide: Packaging protein 3 (322 aa).

The interval 1–24 (MHPILKNIRSQPDQGRAEEHNPEL) is disordered. Positions 1 to 127 (MHPILKNIRS…RDVERWQHDT (127 aa)) are interaction with packaging protein 1.

The protein belongs to the adenoviridae packaging protein 3 family. As to quaternary structure, part of the genome packaging complex composed of packaging proteins 1, 2 and 3; this complex specifically binds to the packaging sequence on the left end of viral genomic DNA and performs packaging of the viral genome. Interacts with hexon-linking protein IIIa; this interaction is required to promote correct genome packaging. Cleaved at different sites by the viral protease during virion maturation.

The protein resides in the host nucleus. In terms of biological role, involved in viral genome packaging through its interaction with packaging proteins 1 and 2. After proteolytic cleavage by adenovirus protease, L1 52/55k protein is removed from the capsid during viral maturation. The chain is Packaging protein 3 from Pantherophis guttatus (Corn snake).